We begin with the raw amino-acid sequence, 344 residues long: Meiotic recombination protein DMC1 homolog (344 aa).

The tract at residues 1 to 22 (MMASLKAEETSQMQLVEREEND) is disordered. 133–140 (GEFRSGKT) provides a ligand contact to ATP. Position 235 (Arg-235) interacts with dsDNA. SsDNA contacts are provided by Arg-235, Phe-238, Arg-241, Arg-247, and Arg-315. Residues Arg-241 and Arg-247 each coordinate dsDNA.

Belongs to the RecA family. DMC1 subfamily. Double stacked ring-shaped homooctamer. Interacts with BRCA2A and BRCA2B. Expressed in mitotic and/or meiotic tissues. Expressed in roots, leaves and anthers and carpels of young fower buds.

The protein localises to the nucleus. Its function is as follows. May participate in meiotic recombination, specifically in homologous strand assimilation, which is required for the resolution of meiotic double-strand breaks. Mediates interhomolog recombination during meiosis. The sequence is that of Meiotic recombination protein DMC1 homolog from Arabidopsis thaliana (Mouse-ear cress).